A 311-amino-acid polypeptide reads, in one-letter code: 4-hydroxy-3-methylbut-2-enyl diphosphate reductase (311 aa).

C12 contacts [4Fe-4S] cluster. (2E)-4-hydroxy-3-methylbut-2-enyl diphosphate contacts are provided by H41 and H74. Positions 41 and 74 each coordinate dimethylallyl diphosphate. Residues H41 and H74 each coordinate isopentenyl diphosphate. Position 96 (C96) interacts with [4Fe-4S] cluster. H124 serves as a coordination point for (2E)-4-hydroxy-3-methylbut-2-enyl diphosphate. H124 lines the dimethylallyl diphosphate pocket. Isopentenyl diphosphate is bound at residue H124. Residue E126 is the Proton donor of the active site. T167 lines the (2E)-4-hydroxy-3-methylbut-2-enyl diphosphate pocket. Residue C197 participates in [4Fe-4S] cluster binding. (2E)-4-hydroxy-3-methylbut-2-enyl diphosphate contacts are provided by S225, S226, N227, and S269. 4 residues coordinate dimethylallyl diphosphate: S225, S226, N227, and S269. Residues S225, S226, N227, and S269 each contribute to the isopentenyl diphosphate site.

Belongs to the IspH family. The cofactor is [4Fe-4S] cluster.

The catalysed reaction is isopentenyl diphosphate + 2 oxidized [2Fe-2S]-[ferredoxin] + H2O = (2E)-4-hydroxy-3-methylbut-2-enyl diphosphate + 2 reduced [2Fe-2S]-[ferredoxin] + 2 H(+). The enzyme catalyses dimethylallyl diphosphate + 2 oxidized [2Fe-2S]-[ferredoxin] + H2O = (2E)-4-hydroxy-3-methylbut-2-enyl diphosphate + 2 reduced [2Fe-2S]-[ferredoxin] + 2 H(+). Its pathway is isoprenoid biosynthesis; dimethylallyl diphosphate biosynthesis; dimethylallyl diphosphate from (2E)-4-hydroxy-3-methylbutenyl diphosphate: step 1/1. The protein operates within isoprenoid biosynthesis; isopentenyl diphosphate biosynthesis via DXP pathway; isopentenyl diphosphate from 1-deoxy-D-xylulose 5-phosphate: step 6/6. Catalyzes the conversion of 1-hydroxy-2-methyl-2-(E)-butenyl 4-diphosphate (HMBPP) into a mixture of isopentenyl diphosphate (IPP) and dimethylallyl diphosphate (DMAPP). Acts in the terminal step of the DOXP/MEP pathway for isoprenoid precursor biosynthesis. This Aeromonas hydrophila subsp. hydrophila (strain ATCC 7966 / DSM 30187 / BCRC 13018 / CCUG 14551 / JCM 1027 / KCTC 2358 / NCIMB 9240 / NCTC 8049) protein is 4-hydroxy-3-methylbut-2-enyl diphosphate reductase.